A 306-amino-acid polypeptide reads, in one-letter code: Elongation factor Ts (306 aa).

The involved in Mg(2+) ion dislocation from EF-Tu stretch occupies residues 80–83; it reads TDFV.

The protein belongs to the EF-Ts family.

It localises to the cytoplasm. Associates with the EF-Tu.GDP complex and induces the exchange of GDP to GTP. It remains bound to the aminoacyl-tRNA.EF-Tu.GTP complex up to the GTP hydrolysis stage on the ribosome. This Clostridium acetobutylicum (strain ATCC 824 / DSM 792 / JCM 1419 / IAM 19013 / LMG 5710 / NBRC 13948 / NRRL B-527 / VKM B-1787 / 2291 / W) protein is Elongation factor Ts.